The primary structure comprises 250 residues: Corrinoid adenosyltransferase MMAB (250 aa).

A mitochondrion-targeting transit peptide spans 1–32 (MAVCGLGSRLGLGSRLGLRGCFGAARLLYPRF). The segment at 34 to 59 (SRGPQGVEDGDRPQPSSKTPRIPKIY) is disordered. ATP-binding positions include 60-63 (TKTG), 68-69 (SS), and Lys78. Position 134 is a phosphoserine (Ser134). An ATP-binding site is contributed by 190 to 194 (RRAER). Residue Lys211 is modified to N6-succinyllysine. Residue Asn214 coordinates ATP. N6-acetyllysine; alternate is present on Lys230. An N6-succinyllysine; alternate modification is found at Lys230.

The protein belongs to the Cob(I)alamin adenosyltransferase family. Homotrimer. As to expression, expressed in liver and skeletal muscle.

The protein resides in the mitochondrion. It catalyses the reaction cob(I)alamin-[corrinoid adenosyltransferase] + ATP = apo-[corrinoid adenosyltransferase] + adenosylcob(III)alamin + triphosphate. Its function is as follows. Converts cob(I)alamin to adenosylcobalamin (adenosylcob(III)alamin), a coenzyme for methylmalonyl-CoA mutase, therefore participates in the final step of the vitamin B12 conversion. Generates adenosylcobalamin (AdoCbl) and directly delivers the cofactor to MUT in a transfer that is stimulated by ATP-binding to MMAB and gated by MMAA. This is Corrinoid adenosyltransferase MMAB from Homo sapiens (Human).